The chain runs to 280 residues: Acyl-[acyl-carrier-protein]--UDP-N-acetylglucosamine O-acyltransferase (280 aa).

Belongs to the transferase hexapeptide repeat family. LpxA subfamily. Homotrimer.

It is found in the cytoplasm. It carries out the reaction a (3R)-hydroxyacyl-[ACP] + UDP-N-acetyl-alpha-D-glucosamine = a UDP-3-O-[(3R)-3-hydroxyacyl]-N-acetyl-alpha-D-glucosamine + holo-[ACP]. It participates in glycolipid biosynthesis; lipid IV(A) biosynthesis; lipid IV(A) from (3R)-3-hydroxytetradecanoyl-[acyl-carrier-protein] and UDP-N-acetyl-alpha-D-glucosamine: step 1/6. In terms of biological role, involved in the biosynthesis of lipid A, a phosphorylated glycolipid that anchors the lipopolysaccharide to the outer membrane of the cell. This Chlamydia trachomatis serovar A (strain ATCC VR-571B / DSM 19440 / HAR-13) protein is Acyl-[acyl-carrier-protein]--UDP-N-acetylglucosamine O-acyltransferase.